A 90-amino-acid polypeptide reads, in one-letter code: Small ribosomal subunit protein uS15 (90 aa).

The protein belongs to the universal ribosomal protein uS15 family. Part of the 30S ribosomal subunit. Forms a bridge to the 50S subunit in the 70S ribosome, contacting the 23S rRNA.

Its function is as follows. One of the primary rRNA binding proteins, it binds directly to 16S rRNA where it helps nucleate assembly of the platform of the 30S subunit by binding and bridging several RNA helices of the 16S rRNA. In terms of biological role, forms an intersubunit bridge (bridge B4) with the 23S rRNA of the 50S subunit in the ribosome. The protein is Small ribosomal subunit protein uS15 of Paraburkholderia xenovorans (strain LB400).